Here is a 160-residue protein sequence, read N- to C-terminus: Methyl-coenzyme M reductase operon protein D (160 aa).

MCR is composed of three subunits: alpha, beta, and gamma. The function of proteins C and D is not known.

The sequence is that of Methyl-coenzyme M reductase operon protein D (mcrD) from Methanococcus vannielii.